The chain runs to 306 residues: Putative dihydroorotate dehydrogenase A (fumarate) (306 aa).

FMN is bound by residues Ser-24 and Lys-48–Ser-49. Substrate-binding positions include Lys-48, Asn-72–Leu-76, and Asn-129. Asn-129 contacts FMN. Cys-132 serves as the catalytic Nucleophile. Residues Lys-167 and Ile-192 each contribute to the FMN site. Asn-193–Ser-194 serves as a coordination point for substrate. Residues Gly-218 and Gly-244–Gly-245 each bind FMN.

This sequence belongs to the dihydroorotate dehydrogenase family. Type 1 subfamily. As to quaternary structure, homodimer. Requires FMN as cofactor.

It is found in the cytoplasm. It catalyses the reaction (S)-dihydroorotate + fumarate = orotate + succinate. The protein operates within pyrimidine metabolism; UMP biosynthesis via de novo pathway. Its function is as follows. Catalyzes the conversion of dihydroorotate to orotate with fumarate as the electron acceptor. This is Putative dihydroorotate dehydrogenase A (fumarate) (pyrD) from Aeropyrum pernix (strain ATCC 700893 / DSM 11879 / JCM 9820 / NBRC 100138 / K1).